The sequence spans 393 residues: MANDFLFTSESVSEGHPDKVADQISDAILDAIFEQDPRSRVAAETLTNTGLVVLAGEITTNAHVDYIQVARDTIKRIGYDNTDYGIDYKGCAVMVCYDKQSNDIAQGVDHASDDHLNTGAGDQGLMFGYACDETPELMPAPIYYAHRLVERQAQLRKDGRLPFLRPDAKSQVTMRYVDGKPHSIDTVVLSTQHHPDQSETPTKMKASFNEAIIEEIIKPVLPKEWLKDTRYLINPTGRFVIGGPQGDCGLTGRKIIVDTYGGACPHGGGAFSGKDPSKVDRSAAYAARYVAKNIVAAGLARQCQIQVAYAIGVAQPMNITVYTEGTGVIPDAKIAELVREFFDLRPKGIIQMLDLLRPIYQKTAAYGHFGREEPEFTWEATTQAAALRAAAGL.

His16 lines the ATP pocket. Asp18 is a Mg(2+) binding site. Residue Glu44 participates in K(+) binding. Residues Glu57 and Gln100 each coordinate L-methionine. Residues 100–110 are flexible loop; the sequence is QSNDIAQGVDH. ATP contacts are provided by residues 167–169, 238–239, Asp247, 253–254, Ala270, and Lys274; these read DAK, RF, and RK. Position 247 (Asp247) interacts with L-methionine. Position 278 (Lys278) interacts with L-methionine.

Belongs to the AdoMet synthase family. Homotetramer; dimer of dimers. Mg(2+) is required as a cofactor. The cofactor is K(+).

Its subcellular location is the cytoplasm. The catalysed reaction is L-methionine + ATP + H2O = S-adenosyl-L-methionine + phosphate + diphosphate. Its pathway is amino-acid biosynthesis; S-adenosyl-L-methionine biosynthesis; S-adenosyl-L-methionine from L-methionine: step 1/1. Its function is as follows. Catalyzes the formation of S-adenosylmethionine (AdoMet) from methionine and ATP. The overall synthetic reaction is composed of two sequential steps, AdoMet formation and the subsequent tripolyphosphate hydrolysis which occurs prior to release of AdoMet from the enzyme. The sequence is that of S-adenosylmethionine synthase from Variovorax paradoxus (strain S110).